Consider the following 674-residue polypeptide: UvrABC system protein B (674 aa).

Positions 26 to 183 (EGLEDGLAHQ…RRLAELQYTR (158 aa)) constitute a Helicase ATP-binding domain. ATP is bound at residue 39 to 46 (GVTGSGKT). The short motif at 92 to 115 (YYDYYQPEAYVPSSDTFIEKDASV) is the Beta-hairpin element. Residues 431–597 (QVDDLLSEIR…GLNKKISDIL (167 aa)) form the Helicase C-terminal domain. One can recognise a UVR domain in the interval 634–669 (QKRIHQLEAQMQQHAQNLEFEEAAQVRDQLHQVREL).

The protein belongs to the UvrB family. In terms of assembly, forms a heterotetramer with UvrA during the search for lesions. Interacts with UvrC in an incision complex.

It localises to the cytoplasm. Functionally, the UvrABC repair system catalyzes the recognition and processing of DNA lesions. A damage recognition complex composed of 2 UvrA and 2 UvrB subunits scans DNA for abnormalities. Upon binding of the UvrA(2)B(2) complex to a putative damaged site, the DNA wraps around one UvrB monomer. DNA wrap is dependent on ATP binding by UvrB and probably causes local melting of the DNA helix, facilitating insertion of UvrB beta-hairpin between the DNA strands. Then UvrB probes one DNA strand for the presence of a lesion. If a lesion is found the UvrA subunits dissociate and the UvrB-DNA preincision complex is formed. This complex is subsequently bound by UvrC and the second UvrB is released. If no lesion is found, the DNA wraps around the other UvrB subunit that will check the other stand for damage. In Erwinia tasmaniensis (strain DSM 17950 / CFBP 7177 / CIP 109463 / NCPPB 4357 / Et1/99), this protein is UvrABC system protein B.